Consider the following 388-residue polypeptide: Queuine tRNA-ribosyltransferase (388 aa).

Asp-90 functions as the Proton acceptor in the catalytic mechanism. Substrate is bound by residues 90-94 (DSGGF), Asp-144, Gln-205, and Gly-232. The RNA binding stretch occupies residues 263 to 269 (GVGTPED). Catalysis depends on Asp-282, which acts as the Nucleophile. The interval 287 to 291 (TRNAR) is RNA binding; important for wobble base 34 recognition. Zn(2+)-binding residues include Cys-320, Cys-322, Cys-325, and His-351.

Belongs to the queuine tRNA-ribosyltransferase family. As to quaternary structure, homodimer. Within each dimer, one monomer is responsible for RNA recognition and catalysis, while the other monomer binds to the replacement base PreQ1. It depends on Zn(2+) as a cofactor.

It catalyses the reaction 7-aminomethyl-7-carbaguanine + guanosine(34) in tRNA = 7-aminomethyl-7-carbaguanosine(34) in tRNA + guanine. The protein operates within tRNA modification; tRNA-queuosine biosynthesis. Functionally, catalyzes the base-exchange of a guanine (G) residue with the queuine precursor 7-aminomethyl-7-deazaguanine (PreQ1) at position 34 (anticodon wobble position) in tRNAs with GU(N) anticodons (tRNA-Asp, -Asn, -His and -Tyr). Catalysis occurs through a double-displacement mechanism. The nucleophile active site attacks the C1' of nucleotide 34 to detach the guanine base from the RNA, forming a covalent enzyme-RNA intermediate. The proton acceptor active site deprotonates the incoming PreQ1, allowing a nucleophilic attack on the C1' of the ribose to form the product. After dissociation, two additional enzymatic reactions on the tRNA convert PreQ1 to queuine (Q), resulting in the hypermodified nucleoside queuosine (7-(((4,5-cis-dihydroxy-2-cyclopenten-1-yl)amino)methyl)-7-deazaguanosine). The chain is Queuine tRNA-ribosyltransferase from Campylobacter curvus (strain 525.92).